The sequence spans 906 residues: Cadherin-2 (906 aa).

Residues 1–25 (MCRIAGGPRTLLPLLAALLQASLEA) form the signal peptide. A propeptide spanning residues 26–159 (SGELALCKTG…HSGALQRQKR (134 aa)) is cleaved from the precursor. Ser-96 carries the post-translational modification Phosphoserine. Cadherin domains follow at residues 160–267 (DWVI…RPEF), 268–382 (LHQV…PPEF), 383–497 (TAMT…NPYF), 498–603 (APNP…DNAP), and 604–717 (QVLP…RIVG). Over 160–724 (DWVIPPINLP…IVGAGLGTGT (565 aa)) the chain is Extracellular. Glu-170 provides a ligand contact to Ca(2+). Asn-190 carries an N-linked (GlcNAc...) asparagine glycan. Positions 226, 228, 259, 260, 261, 262, and 263 each coordinate Ca(2+). N-linked (GlcNAc...) asparagine glycosylation is present at Asn-273. 3 residues coordinate Ca(2+): Asp-293, Asp-295, and Asn-301. Asn-325 carries an N-linked (GlcNAc...) asparagine glycan. Residue Asp-353 participates in Ca(2+) binding. N-linked (GlcNAc...) asparagine glycans are attached at residues Asn-402, Asn-572, Asn-622, Asn-651, and Asn-692. A helical transmembrane segment spans residues 725–745 (IIAILLCIIILLILVLMFVVW). At 746–906 (MKRRDKERQA…LADMYGGGDD (161 aa)) the chain is on the cytoplasmic side. Over residues 863–880 (SGSTAGSLSSLNSSSSGG) the composition is skewed to low complexity. The tract at residues 863–883 (SGSTAGSLSSLNSSSSGGDQD) is disordered.

As to quaternary structure, homodimer (via extracellular region). Can also form heterodimers with other cadherins (via extracellular region). Dimerization occurs in trans, i.e. with a cadherin chain from another cell. Interacts with PCDH8; this complex may also include TAOK2. The interaction with PCDH8 may lead to internalization through TAOK2/p38 MAPK pathway. Identified in a complex containing FGFR4, NCAM1, CDH2, PLCG1, FRS2, SRC, SHC1, GAP43 and CTTN. May interact with OBSCN (via protein kinase domain 2). Interacts with FBXO45. Post-translationally, cleaved by MMP24. Ectodomain cleavage leads to the generation of a soluble 90 kDa N-terminal soluble fragment and a 45 kDa membrane-bound C-terminal fragment 1 (CTF1), which is further cleaved by gamma-secretase into a 35 kDa. Cleavage in neural stem cells by MMP24 affects CDH2-mediated anchorage of neural stem cells to ependymocytes in the adult subependymal zone, leading to modulate neural stem cell quiescence. In terms of processing, may be phosphorylated by OBSCN. As to expression, in testis, expressed in Sertoli and germ cells.

The protein localises to the cell membrane. It is found in the sarcolemma. The protein resides in the cell junction. Its subcellular location is the cell surface. It localises to the desmosome. The protein localises to the adherens junction. Functionally, calcium-dependent cell adhesion protein; preferentially mediates homotypic cell-cell adhesion by dimerization with a CDH2 chain from another cell. Cadherins may thus contribute to the sorting of heterogeneous cell types. Acts as a regulator of neural stem cells quiescence by mediating anchorage of neural stem cells to ependymocytes in the adult subependymal zone: upon cleavage by MMP24, CDH2-mediated anchorage is affected, leading to modulate neural stem cell quiescence. Plays a role in cell-to-cell junction formation between pancreatic beta cells and neural crest stem (NCS) cells, promoting the formation of processes by NCS cells. Required for proper neurite branching. Required for pre- and postsynaptic organization. CDH2 may be involved in neuronal recognition mechanism. In hippocampal neurons, may regulate dendritic spine density. The sequence is that of Cadherin-2 (Cdh2) from Rattus norvegicus (Rat).